A 41-amino-acid polypeptide reads, in one-letter code: Bacteriocin bavaricin-A (41 aa).

This sequence belongs to the bacteriocin class IIA/YGNGV family.

The protein localises to the secreted. In terms of biological role, this heat stable bacteriocin shows activity against species of Lactobacillus, Listeria monocytogenes, Pediococcus, Enterococcus, Leuconostoc and Lactococcus. In Latilactobacillus sakei (Lactobacillus sakei), this protein is Bacteriocin bavaricin-A.